The primary structure comprises 506 residues: Maturase K (506 aa).

This sequence belongs to the intron maturase 2 family. MatK subfamily.

The protein resides in the plastid. The protein localises to the chloroplast. Functionally, usually encoded in the trnK tRNA gene intron. Probably assists in splicing its own and other chloroplast group II introns. The polypeptide is Maturase K (Trifolium hybridum (Alsike clover)).